The chain runs to 202 residues: Thymidylate kinase (202 aa).

Position 13 to 20 (13 to 20 (GTDGAGKS)) interacts with ATP.

It belongs to the thymidylate kinase family.

The enzyme catalyses dTMP + ATP = dTDP + ADP. Its function is as follows. Phosphorylation of dTMP to form dTDP in both de novo and salvage pathways of dTTP synthesis. This is Thymidylate kinase from Desulfotalea psychrophila (strain LSv54 / DSM 12343).